The sequence spans 355 residues: Probable dual-specificity RNA methyltransferase RlmN (355 aa).

E92 acts as the Proton acceptor in catalysis. One can recognise a Radical SAM core domain in the interval 98 to 330 (FHYGLSVCVT…TELGINCGVR (233 aa)). C105 and C341 form a disulfide bridge. The [4Fe-4S] cluster site is built by C112, C116, and C119. Residues 164–165 (GE), S196, 219–221 (SLH), and N297 each bind S-adenosyl-L-methionine. C341 acts as the S-methylcysteine intermediate in catalysis.

This sequence belongs to the radical SAM superfamily. RlmN family. [4Fe-4S] cluster serves as cofactor.

Its subcellular location is the cytoplasm. The catalysed reaction is adenosine(2503) in 23S rRNA + 2 reduced [2Fe-2S]-[ferredoxin] + 2 S-adenosyl-L-methionine = 2-methyladenosine(2503) in 23S rRNA + 5'-deoxyadenosine + L-methionine + 2 oxidized [2Fe-2S]-[ferredoxin] + S-adenosyl-L-homocysteine. It carries out the reaction adenosine(37) in tRNA + 2 reduced [2Fe-2S]-[ferredoxin] + 2 S-adenosyl-L-methionine = 2-methyladenosine(37) in tRNA + 5'-deoxyadenosine + L-methionine + 2 oxidized [2Fe-2S]-[ferredoxin] + S-adenosyl-L-homocysteine. In terms of biological role, specifically methylates position 2 of adenine 2503 in 23S rRNA and position 2 of adenine 37 in tRNAs. The sequence is that of Probable dual-specificity RNA methyltransferase RlmN from Oceanobacillus iheyensis (strain DSM 14371 / CIP 107618 / JCM 11309 / KCTC 3954 / HTE831).